The following is an 804-amino-acid chain: Endoplasmin (804 aa).

Residues 1-21 form the signal peptide; sequence MRALWVLGLCCVLLTFGSVRA. An SRT pseudosubstrate motif motif is present at residues 42 to 44; the sequence is SRT. N62 is a glycosylation site (N-linked (GlcNAc...) asparagine). At S64 the chain carries Phosphoserine. N107 carries N-linked (GlcNAc...) asparagine glycosylation. ATP contacts are provided by N107, D149, and N162. An N6-(2-hydroxyisobutyryl)lysine modification is found at K168. At S172 the chain carries Phosphoserine. Residue F199 coordinates ATP. N217 is a glycosylation site (N-linked (GlcNAc...) asparagine). T288 is subject to Phosphothreonine; by CK2. The interval 288–323 is disordered; the sequence is TVEEPMEEEEAAKEEKEDSDDEAAVEEEEEEKKPKT. Positions 289-317 are enriched in acidic residues; that stretch reads VEEPMEEEEAAKEEKEDSDDEAAVEEEEE. S306 is modified (phosphoserine; by CK2). At S403 the chain carries Phosphoserine. K404 bears the N6-succinyllysine mark. N445 is a glycosylation site (N-linked (GlcNAc...) asparagine). At S447 the chain carries Phosphoserine. Residue K479 is modified to N6-acetyllysine. N-linked (GlcNAc...) asparagine glycans are attached at residues N481 and N502. K633 is modified (N6-succinyllysine). The segment at 750 to 804 is disordered; that stretch reads DPDAKVEEEPEEEPEETTEDTTEDTEQDDEEEMDAGTDDEEQETVKKSTAEKDEL. Positions 757 to 791 are enriched in acidic residues; sequence EEPEEEPEETTEDTTEDTEQDDEEEMDAGTDDEEQ. 4 positions are modified to phosphothreonine; by CK2: T766, T770, T774, and T786. The segment covering 792–804 has biased composition (basic and acidic residues); sequence ETVKKSTAEKDEL. Residues 801-804 carry the Prevents secretion from ER motif; it reads KDEL.

This sequence belongs to the heat shock protein 90 family. As to quaternary structure, homodimer; disulfide-linked. Component of an EIF2 complex at least composed of CELF1/CUGBP1, CALR, CALR3, EIF2S1, EIF2S2, HSP90B1 and HSPA5. Part of a large chaperone multiprotein complex comprising DNAJB11, HSP90B1, HSPA5, HYOU, PDIA2, PDIA4, PDIA6, PPIB, SDF2L1, UGGT1 and very small amounts of ERP29, but not, or at very low levels, CALR nor CANX. Interacts with AIMP1; regulates its retention in the endoplasmic reticulum. Hyperglycosylated form interacts with OS9; promoting its degradation by the endoplasmic reticulum associated degradation (ERAD). Interacts with CNPY3. This interaction is disrupted in the presence of ATP. Interacts with TLR4 and TLR9, but not with TLR3. Interacts with MZB1 in a calcium-dependent manner. Interacts with METTL23. Interacts with IL1B; the interaction facilitates cargo translocation into the ERGIC. Interacts with EIF2AK3. In terms of processing, phosphorylated by CK2. N-glycosylated cotranslationally at Asn-217 by STT3A-containing OST-A complex: this glycosylation is constitutive. In response to various stress, 5 additional facultative sites (Asn-62, Asn-107, Asn-445, Asn-481 and Asn-502) can be glycosylated post-translationally by STT3B-containing OST-B complex, leading to a hyperglycosylated form that is degraded by the ER-associated degradation (ERAD) pathway. In normal conditions, the OST-A complex together with CCDC134 prevent glycosylation at facultative sites during protein folding, thereby preventing hyperglycosylation. Mechanistically, nascent HSP90B1 is tethered during translation to a specialized CCDC134-containing translocon that forms a microenvironment for its folding, in which STT3A associates with the SRT pseudosubstrate motif, and prevents access to facultative glycosylation sites until folding is completed, rendering its facultative sites inaccessible to the OST-B complex. As to expression, detected in heart muscle (at protein level).

It is found in the endoplasmic reticulum lumen. It localises to the sarcoplasmic reticulum lumen. The protein localises to the melanosome. The catalysed reaction is ATP + H2O = ADP + phosphate + H(+). Functionally, ATP-dependent chaperone involved in the processing of proteins in the endoplasmic reticulum, regulating their transport. Together with MESD, acts as a modulator of the Wnt pathway by promoting the folding of LRP6, a coreceptor of the canonical Wnt pathway. When associated with CNPY3, required for proper folding of Toll-like receptors. Promotes folding and trafficking of TLR4 to the cell surface. May participate in the unfolding of cytosolic leaderless cargos (lacking the secretion signal sequence) such as the interleukin 1/IL-1 to facilitate their translocation into the ERGIC (endoplasmic reticulum-Golgi intermediate compartment) and secretion; the translocation process is mediated by the cargo receptor TMED10. May also function in endoplasmic reticulum associated degradation (ERAD); it is however unclear whether it participates to ERAD or is a target of ERAD. This chain is Endoplasmin (HSP90B1), found in Canis lupus familiaris (Dog).